The chain runs to 214 residues: ER lumen protein-retaining receptor 3 (214 aa).

Residues 1–4 lie on the Lumenal side of the membrane; it reads MNVF. A helical membrane pass occupies residues 5–24; sequence RISGDVSHLLAIIILLLKMW. Topologically, residues 25-32 are cytoplasmic; that stretch reads KSKSCAGI. Residues 33 to 52 form a helical membrane-spanning segment; sequence SGKSQLLFALVFTTRYLDLF. Positions 47-48 are interaction with the K-D-E-L motif on target proteins; the sequence is RY. Residues 53–58 lie on the Lumenal side of the membrane; the sequence is TVFISA. Residues 59-79 form a helical membrane-spanning segment; that stretch reads YNTVMKIVFLVCAYVTVYLIY. At 80 to 92 the chain is on the cytoplasmic side; it reads GKFRKAYDSENDT. The helical transmembrane segment at 93 to 110 threads the bilayer; that stretch reads FRLEFLLVPVIGLSFLEN. Over 111-116 the chain is Lumenal; sequence YEFTPL. Residues 117 to 135 form a helical membrane-spanning segment; it reads EILWTFSIYLESVAILPQL. At 136-149 the chain is on the cytoplasmic side; sequence FMISKTGEAESITT. A helical membrane pass occupies residues 150-168; it reads HYLFFLGLYRVLYLANWIW. The tract at residues 159–169 is interaction with the K-D-E-L motif on target proteins; that stretch reads RVLYLANWIWR. At 169 to 178 the chain is on the lumenal side; it reads RYHTEKFYDQ. Residues 179 to 199 traverse the membrane as a helical segment; the sequence is IAVVSGVVQTIFYFDFFYLYI. Over 200–214 the chain is Cytoplasmic; sequence TKVLKGKKLSLPMPV. Residues 204 to 207 are important for recycling of cargo proteins with the sequence motif K-D-E-L from the Golgi to the endoplasmic reticulum; it reads KGKK.

The protein belongs to the ERD2 family.

It is found in the endoplasmic reticulum membrane. Its subcellular location is the golgi apparatus membrane. The protein resides in the cytoplasmic vesicle. The protein localises to the COPI-coated vesicle membrane. Receptor for the C-terminal sequence motif K-D-E-L that is present on endoplasmic reticulum resident proteins and that mediates their recycling from the Golgi back to the endoplasmic reticulum. The chain is ER lumen protein-retaining receptor 3 (kdelr3) from Xenopus tropicalis (Western clawed frog).